The chain runs to 430 residues: Adenylosuccinate synthetase (430 aa).

GTP contacts are provided by residues 12–18 (GDEGKGK) and 40–42 (GHT). The Proton acceptor role is filled by D13. Mg(2+) is bound by residues D13 and G40. IMP-binding positions include 13–16 (DEGK), 38–41 (NAGH), T128, R142, Q223, T238, and R302. H41 acts as the Proton donor in catalysis. Position 298–304 (298–304 (TTTGRPR)) interacts with substrate. GTP is bound by residues R304, 330 to 332 (LLD), and 412 to 414 (SVG).

The protein belongs to the adenylosuccinate synthetase family. Homodimer. Requires Mg(2+) as cofactor.

It is found in the cytoplasm. It carries out the reaction IMP + L-aspartate + GTP = N(6)-(1,2-dicarboxyethyl)-AMP + GDP + phosphate + 2 H(+). Its pathway is purine metabolism; AMP biosynthesis via de novo pathway; AMP from IMP: step 1/2. Its function is as follows. Plays an important role in the de novo pathway of purine nucleotide biosynthesis. Catalyzes the first committed step in the biosynthesis of AMP from IMP. The sequence is that of Adenylosuccinate synthetase from Listeria innocua serovar 6a (strain ATCC BAA-680 / CLIP 11262).